The following is a 192-amino-acid chain: Peptidyl-tRNA hydrolase (192 aa).

Tyr14 is a binding site for tRNA. His19 (proton acceptor) is an active-site residue. Tyr64, Asn66, and Asn112 together coordinate tRNA.

Belongs to the PTH family. In terms of assembly, monomer.

It localises to the cytoplasm. It catalyses the reaction an N-acyl-L-alpha-aminoacyl-tRNA + H2O = an N-acyl-L-amino acid + a tRNA + H(+). Functionally, hydrolyzes ribosome-free peptidyl-tRNAs (with 1 or more amino acids incorporated), which drop off the ribosome during protein synthesis, or as a result of ribosome stalling. Catalyzes the release of premature peptidyl moieties from peptidyl-tRNA molecules trapped in stalled 50S ribosomal subunits, and thus maintains levels of free tRNAs and 50S ribosomes. This chain is Peptidyl-tRNA hydrolase, found in Anaeromyxobacter dehalogenans (strain 2CP-C).